Here is a 663-residue protein sequence, read N- to C-terminus: Translation factor GUF1 homolog, mitochondrial (663 aa).

Residues 1 to 33 constitute a mitochondrion transit peptide; sequence MAGAAALRRSARRVVLPGAYALSRALQHPERLL. Positions 55–247 constitute a tr-type G domain; the sequence is ERVRNFSIIA…AVIERIPSPP (193 aa). GTP-binding positions include 64–71, 140–144, and 194–197; these read AHVDHGKS, DTPGH, and NKID.

It belongs to the TRAFAC class translation factor GTPase superfamily. Classic translation factor GTPase family. LepA subfamily.

Its subcellular location is the mitochondrion inner membrane. The catalysed reaction is GTP + H2O = GDP + phosphate + H(+). Its function is as follows. Promotes mitochondrial protein synthesis. May act as a fidelity factor of the translation reaction, by catalyzing a one-codon backward translocation of tRNAs on improperly translocated ribosomes. Binds to mitochondrial ribosomes in a GTP-dependent manner. In Oryza sativa subsp. japonica (Rice), this protein is Translation factor GUF1 homolog, mitochondrial.